Here is a 471-residue protein sequence, read N- to C-terminus: Glutamate--tRNA ligase (471 aa).

Positions proline 9–glycine 19 match the 'HIGH' region motif. The Zn(2+) site is built by cysteine 98, cysteine 100, cysteine 125, and histidine 127. The short motif at lysine 237 to arginine 241 is the 'KMSKS' region element. Lysine 240 contacts ATP.

Belongs to the class-I aminoacyl-tRNA synthetase family. Glutamate--tRNA ligase type 1 subfamily. Monomer. Zn(2+) serves as cofactor.

It is found in the cytoplasm. The enzyme catalyses tRNA(Glu) + L-glutamate + ATP = L-glutamyl-tRNA(Glu) + AMP + diphosphate. Functionally, catalyzes the attachment of glutamate to tRNA(Glu) in a two-step reaction: glutamate is first activated by ATP to form Glu-AMP and then transferred to the acceptor end of tRNA(Glu). The chain is Glutamate--tRNA ligase from Salmonella schwarzengrund (strain CVM19633).